We begin with the raw amino-acid sequence, 334 residues long: MKPKVFITRAIPENGIDMLREHFEVEVWPEEREIPREVLLEKVRDVDALVTMLSERIDGEVFDNAPRLRIVANYAVGYDNVDVEEATRRGIYVTNTPDVLTNATADFAWTLLLATARRLIEADSFTRSGEWKRKGIAWHPLMFLGHDVYGKTIGIIGFGRIGQAVARRAKGFGMRILYYSRTRKPEAEEELKAEFKPLEELLKESDFVVLAVPLTKETYHMIGERELKLMKPTAILVNIARGKVVDTEALIKALKEGWIAGAGLDVFEEEPYYNEELFSLKNVILAPHIGSATFGAREGMAELVARNLIAFKNGEVPPTLVNKEVVKVKKPGFR.

NADP(+) is bound by residues Phe158–Ile161, Ser180–Thr182, and Ile239–Arg241. Catalysis depends on residues Arg241 and Glu270. His288 serves as the catalytic Proton donor. Residue His288–Gly290 participates in NADP(+) binding.

It belongs to the D-isomer specific 2-hydroxyacid dehydrogenase family. GyaR subfamily. In terms of assembly, homodimer.

Its subcellular location is the cytoplasm. The catalysed reaction is glycolate + NAD(+) = glyoxylate + NADH + H(+). This chain is Glyoxylate reductase, found in Thermococcus gammatolerans (strain DSM 15229 / JCM 11827 / EJ3).